A 469-amino-acid polypeptide reads, in one-letter code: Neuraminidase (469 aa).

Over 1 to 9 (MNPNQKIIT) the chain is Intravirion. A helical transmembrane segment spans residues 10–30 (IGSVSLTIATICFLMQIAILV). The segment at 11–33 (GSVSLTIATICFLMQIAILVTTV) is involved in apical transport and lipid raft association. At 31-469 (TTVTLHFKQY…DGADINLMPI (439 aa)) the chain is on the virion surface side. Residues 36 to 88 (HFKQYECDSPANNQVMPCEPIIIERNITEIVYLTNTTIEKEICPKLVEYRNWS) are hypervariable stalk region. N-linked (GlcNAc...) asparagine; by host glycosylation is found at Asn-61, Asn-70, and Asn-86. Positions 91–469 (QCKITGFAPF…DGADINLMPI (379 aa)) are head of neuraminidase. 8 cysteine pairs are disulfide-bonded: Cys-92–Cys-417, Cys-124–Cys-129, Cys-183–Cys-230, Cys-232–Cys-237, Cys-278–Cys-291, Cys-280–Cys-289, Cys-318–Cys-337, and Cys-421–Cys-447. Arg-118 lines the substrate pocket. A glycan (N-linked (GlcNAc...) asparagine; by host) is linked at Asn-146. Asp-151 serves as the catalytic Proton donor/acceptor. Arg-152 provides a ligand contact to substrate. Asn-200 and Asn-234 each carry an N-linked (GlcNAc...) asparagine; by host glycan. 276-277 (EE) provides a ligand contact to substrate. Arg-292 is a binding site for substrate. Positions 293, 297, and 324 each coordinate Ca(2+). Arg-371 contributes to the substrate binding site. Catalysis depends on Tyr-406, which acts as the Nucleophile.

This sequence belongs to the glycosyl hydrolase 34 family. In terms of assembly, homotetramer. Requires Ca(2+) as cofactor. N-glycosylated.

The protein localises to the virion membrane. It is found in the host apical cell membrane. The enzyme catalyses Hydrolysis of alpha-(2-&gt;3)-, alpha-(2-&gt;6)-, alpha-(2-&gt;8)- glycosidic linkages of terminal sialic acid residues in oligosaccharides, glycoproteins, glycolipids, colominic acid and synthetic substrates.. With respect to regulation, inhibited by the neuraminidase inhibitors zanamivir (Relenza) and oseltamivir (Tamiflu). These drugs interfere with the release of progeny virus from infected cells and are effective against all influenza strains. Resistance to neuraminidase inhibitors is quite rare. In terms of biological role, catalyzes the removal of terminal sialic acid residues from viral and cellular glycoconjugates. Cleaves off the terminal sialic acids on the glycosylated HA during virus budding to facilitate virus release. Additionally helps virus spread through the circulation by further removing sialic acids from the cell surface. These cleavages prevent self-aggregation and ensure the efficient spread of the progeny virus from cell to cell. Otherwise, infection would be limited to one round of replication. Described as a receptor-destroying enzyme because it cleaves a terminal sialic acid from the cellular receptors. May facilitate viral invasion of the upper airways by cleaving the sialic acid moieties on the mucin of the airway epithelial cells. Likely to plays a role in the budding process through its association with lipid rafts during intracellular transport. May additionally display a raft-association independent effect on budding. Plays a role in the determination of host range restriction on replication and virulence. Sialidase activity in late endosome/lysosome traffic seems to enhance virus replication. The chain is Neuraminidase from Aves (whales).